Here is a 189-residue protein sequence, read N- to C-terminus: Dihydrofolate reductase (189 aa).

In terms of domain architecture, DHFR spans 3 to 184 (SLNSIVAVCQ…IQYKFEVYQK (182 aa)). NADP(+) is bound by residues Ala9 and 15–21 (GIGKDGN). A substrate-binding site is contributed by 30–35 (EYKYFQ). Position 54–56 (54–56 (KKT)) interacts with NADP(+). The substrate site is built by Asn64 and Arg70. NADP(+)-binding positions include 76 to 78 (SRE) and 116 to 123 (GGTAVYKA).

The protein belongs to the dihydrofolate reductase family.

It carries out the reaction (6S)-5,6,7,8-tetrahydrofolate + NADP(+) = 7,8-dihydrofolate + NADPH + H(+). The protein operates within cofactor biosynthesis; tetrahydrofolate biosynthesis; 5,6,7,8-tetrahydrofolate from 7,8-dihydrofolate: step 1/1. Its function is as follows. Key enzyme in folate metabolism. Contributes to the de novo mitochondrial thymidylate biosynthesis pathway. Catalyzes an essential reaction for de novo glycine and purine synthesis, and for DNA precursor synthesis. May bind to mRNA. The sequence is that of Dihydrofolate reductase (DHFR) from Gallus gallus (Chicken).